Consider the following 203-residue polypeptide: Cupin-domain-containing oxidoreductase fogC (203 aa).

The interval 105 to 171 (DFAPGVESPL…GNGTLPGRML (67 aa)) is cupin-like domain.

The protein belongs to the virC family.

The protein operates within secondary metabolite biosynthesis. Its function is as follows. Cupin-domain-containing oxidoreductase; part of the gene cluster that mediates the biosynthesis of flavoglaucin and congeners (including aspergin, dihydroauroglaucin and auroglaucin), prenylated salicylaldehyde derivatives carrying a saturated or an unsaturated C-7 side chain. The PKS fogA releases the carboxylic acid (8E,10E,12E)-3,5,7-trihydroxytetradeca-8,10,12-trienoic acid as its product, as well as derivatives with one and two double bonds. FogA is indeed able to reduce the initial triketide, thus being at least partially responsible for the differently saturated heptyl side chains of flavoglaucin congeners. The oxidoreductases fogB, fogC and fogD modify the nascent polyketide in fogA-bound form and, together, fogA, fogB, fogC and fogD are necessary for the formation of the aromatic core and the cyclized PKS products are released as salicyl alcohols. In particular, fogB is responsible for oxidation of a hydroxyl group or reduction of remaining double bond(s) at the C-7 residue whereas fogD is probably involved in the reductive release of the modified PKS products. The cytochrome P450 monooxygenase fogE is then responsible for the hydroxylation at C-3 of the benzene ring. The fogE products are substrates of the prenyltransferase fogH and the prenylated benzyl alcohols are subsequently oxidized by the fogF to produce the final aryl aldehydes flavoglaucin and congeners. The short-chain dehydrogenase fogG does not seem to be involved in the biosynthesis of the prenylated salicylaldehyde derivatives. The sequence is that of Cupin-domain-containing oxidoreductase fogC from Aspergillus ruber (strain CBS 135680).